The chain runs to 128 residues: Fluoride-specific ion channel FluC (128 aa).

4 helical membrane-spanning segments follow: residues 5–25 (IVAI…LALA), 35–55 (LGTL…AVVF), 67–87 (LFVI…SVEV), and 96–116 (FGWA…LTAL). Positions 75 and 78 each coordinate Na(+).

The protein belongs to the fluoride channel Fluc/FEX (TC 1.A.43) family.

Its subcellular location is the cell inner membrane. The enzyme catalyses fluoride(in) = fluoride(out). Its activity is regulated as follows. Na(+) is not transported, but it plays an essential structural role and its presence is essential for fluoride channel function. Functionally, fluoride-specific ion channel. Important for reducing fluoride concentration in the cell, thus reducing its toxicity. The protein is Fluoride-specific ion channel FluC of Burkholderia ambifaria (strain MC40-6).